A 65-amino-acid chain; its full sequence is Small ribosomal subunit protein eS17 (65 aa).

Belongs to the eukaryotic ribosomal protein eS17 family.

The sequence is that of Small ribosomal subunit protein eS17 from Methanobrevibacter smithii (strain ATCC 35061 / DSM 861 / OCM 144 / PS).